The chain runs to 27 residues: Pregnancy-associated glycoprotein 59 (27 aa).

It belongs to the peptidase A1 family. Post-translationally, glycosylated. As to expression, placenta.

In Capra hircus (Goat), this protein is Pregnancy-associated glycoprotein 59 (PAG59).